Consider the following 984-residue polypeptide: Glutamate [NMDA] receptor subunit 1 (984 aa).

Positions 1–24 are cleaved as a signal peptide; sequence MAAAFAYRWLLCAAGIVNVLPIGA. The Extracellular segment spans residues 25–570; sequence QRHTASDNPS…TLVSFLQPFS (546 aa). N-linked (GlcNAc...) asparagine glycans are attached at residues Asn255, Asn311, Asn342, Asn394, Asn451, Asn478, and Asn498. Residues 527–529 and Arg534 each bind glycine; that span reads PLT. The helical transmembrane segment at 571–591 threads the bilayer; sequence NTLWILVMVSVHVVALVLYLL. Residues 592–648 are Cytoplasmic-facing; it reads DRFSPFGRFKLSHSDSNEEKALNLSSAVWFAWGVLLNSGIGEGTPRSFSARVLGMVW. Residues 649-669 traverse the membrane as a helical segment; sequence AGFAMIIVASYTANLAAFLVL. The Extracellular segment spans residues 670 to 828; sequence ERPKTKLSGI…KTPNTLGLKN (159 aa). Residue Asn690 is glycosylated (N-linked (GlcNAc...) asparagine). Positions 700 and 744 each coordinate glycine. Residues 829–849 form a helical membrane-spanning segment; it reads MAGVFILVGVGIAGGVGLIII. Residues 850 to 984 are Cytoplasmic-facing; sequence EVIYKKHQVK…YTSDVSHLVV (135 aa). The interval 947 to 984 is disordered; the sequence is KSGLVPPALGLGKTRPQQNPLPPRYSPGYTSDVSHLVV. The span at 974-984 shows a compositional bias: polar residues; the sequence is GYTSDVSHLVV.

This sequence belongs to the glutamate-gated ion channel (TC 1.A.10.1) family. Forms a heteromeric NMDA channel with Nmdar2.

It is found in the cell membrane. It localises to the postsynaptic cell membrane. Its subcellular location is the postsynaptic density. NMDA receptor subtype of glutamate-gated ion channels with high calcium permeability and voltage-dependent sensitivity to magnesium. Mediated by glycine. This protein plays a key role in synaptic plasticity, synaptogenesis, excitotoxicity, memory acquisition and learning. It mediates neuronal functions in glutamate neurotransmission. Is involved in the cell surface targeting of NMDA receptors. Plays a role in associative learning and in long-term memory consolidation. This Drosophila virilis (Fruit fly) protein is Glutamate [NMDA] receptor subunit 1.